The primary structure comprises 908 residues: Glutamate receptor ionotropic, kainate 2 (908 aa).

The N-terminal stretch at 1–31 (MKIISPVLSNLVFSRSIKVLLCLLWIGYSQG) is a signal peptide. Residues 32 to 561 (TTHVLRFGGI…VFSFLNPLSP (530 aa)) lie on the Extracellular side of the membrane. Asn67, Asn73, Asn275, Asn378, Asn412, Asn423, and Asn430 each carry an N-linked (GlcNAc...) asparagine glycan. The cysteines at positions 96 and 347 are disulfide-linked. Residues Pro516, Ala518, and Arg523 each coordinate L-glutamate. An N-linked (GlcNAc...) asparagine glycan is attached at Asn546. Residues 562–582 (DIWMYILLAYLGVSCVLFVIA) traverse the membrane as a helical segment. At 583–638 (RFSPYEWYNPHPCNPDSDVVENNFTLLNSFWFGVGALMQQGSELMPKALSTRIVGG) the chain is on the cytoplasmic side. A helical transmembrane segment spans residues 639 to 659 (IWWFFTLIIISSYTANLAAFL). Over 660–819 (TVERMESPID…KEASALGVQN (160 aa)) the chain is Extracellular. Residues Ala689, Thr690, and Glu738 each coordinate L-glutamate. Residues Cys750 and Cys804 are joined by a disulfide bond. Asn751 is a glycosylation site (N-linked (GlcNAc...) asparagine). A helical transmembrane segment spans residues 820–840 (IGGIFIVLAAGLVLSVFVAVG). Topologically, residues 841–908 (EFLYKSKKNA…RRLPGKETMA (68 aa)) are cytoplasmic. Phosphoserine; by PKC is present on residues Ser846 and Ser868. Lys886 participates in a covalent cross-link: Glycyl lysine isopeptide (Lys-Gly) (interchain with G-Cter in SUMO1).

This sequence belongs to the glutamate-gated ion channel (TC 1.A.10.1) family. GRIK2 subfamily. As to quaternary structure, homotetramer and heterotetramer with GRIK5. Tetramers may be formed by the dimerization of dimers. Assembles into a kainate-gated homomeric channel that does not bind AMPA. Can form functional heteromeric receptors with GRIK3. Forms a heteromeric complex with GRIK4 and GRIK5. Interacts with DLG4. Interacts (via C-terminus) with KLHL17 (via kelch repeats); the interaction targets GRIK2 for degradation via ubiquitin-proteasome pathway. Interacts with NETO2. In terms of processing, sumoylation mediates kainate receptor-mediated endocytosis and regulates synaptic transmission. Sumoylation is enhanced by PIAS3 and desumoylated by SENP1. Ubiquitinated. Ubiquitination regulates the GRIK2 levels at the synapse by leading kainate receptor degradation through proteasome. Post-translationally, phosphorylated by PKC at Ser-868 upon agonist activation, this directly enhance sumoylation. Expressed in the hippocampal mossy fiber synapses (at protein level). Most abundant in the cerebellum and the hypothalamus. Expressed in a proportion of dorsal root ganglion (DRG) neurons (13.6%); predominantly small diameter DRG neurons (75%) with the remainder expressed in medium diameter DRG neurons.

It is found in the cell membrane. The protein resides in the postsynaptic cell membrane. The enzyme catalyses Ca(2+)(in) = Ca(2+)(out). The catalysed reaction is Na(+)(in) = Na(+)(out). Its activity is regulated as follows. Cold receptor activity activated by temperatures between 10-19 degrees Celsius. Functionally, ionotropic glutamate receptor that functions as a cation-permeable ligand-gated ion channel, gated by L-glutamate and the glutamatergic agonist kainic acid. L-glutamate acts as an excitatory neurotransmitter at many synapses in the central nervous system. Binding of the excitatory neurotransmitter L-glutamate induces a conformation change, leading to the opening of the cation channel, and thereby converts the chemical signal to an electrical impulse. The receptor then desensitizes rapidly and enters a transient inactive state, characterized by the presence of bound agonist. Modulates cell surface expression of NETO2. In association with GRIK3, involved in presynaptic facilitation of glutamate release at hippocampal mossy fiber synapses. Independent of its ionotropic glutamate receptor activity, acts as a thermoreceptor conferring sensitivity to cold temperatures. Functions in dorsal root ganglion neurons. In terms of biological role, ionotropic glutamate receptor that functions as a cation-permeable ligand-gated ion channel, gated by L-glutamate and the glutamatergic agonist kainic acid. The chain is Glutamate receptor ionotropic, kainate 2 (Grik2) from Mus musculus (Mouse).